Consider the following 208-residue polypeptide: Cysteine-rich protein 2 (208 aa).

The region spanning 5 to 57 is the LIM zinc-binding 1 domain; sequence CPKCDKTVYFAEKVSSLGKDWHKFCLKCERCNKTLTPGGHAEHDGKPFCHKPC. K23 is modified (N6-acetyllysine). A Phosphoserine modification is found at S104. The 53-residue stretch at 126 to 178 folds into the LIM zinc-binding 2 domain; the sequence is CPRCNKRVYFAEKVTSLGKDWHRPCLRCERCSKTLTPGGHAEHDGQPYCHKPC. Residues K138 and K144 each carry the N6-acetyllysine modification.

In terms of assembly, interacts with TGFB1I1. As to expression, expressed more abundantly in liver and kidney of females than that of males. Equally expressed in brain, lung and heart.

The polypeptide is Cysteine-rich protein 2 (Crip2) (Rattus norvegicus (Rat)).